The following is a 147-amino-acid chain: Cytochrome c-type biogenesis protein CcmE (147 aa).

The Cytoplasmic segment spans residues 1 to 7 (MTRKQKR). The helical; Signal-anchor for type II membrane protein transmembrane segment at 8 to 28 (LSVIVGGLAFLGAATGLTFYA) threads the bilayer. Topologically, residues 29–147 (LGQKASYFYM…KGVWQESKSE (119 aa)) are periplasmic. Residues H122 and Y126 each coordinate heme.

This sequence belongs to the CcmE/CycJ family.

The protein resides in the cell inner membrane. Heme chaperone required for the biogenesis of c-type cytochromes. Transiently binds heme delivered by CcmC and transfers the heme to apo-cytochromes in a process facilitated by CcmF and CcmH. In Mesorhizobium japonicum (strain LMG 29417 / CECT 9101 / MAFF 303099) (Mesorhizobium loti (strain MAFF 303099)), this protein is Cytochrome c-type biogenesis protein CcmE.